The following is a 376-amino-acid chain: Penicillin V acylase (376 aa).

Positions 1-29 are cleaved as a signal peptide; that stretch reads MIKNNKRIKSTVCALSLVALTLGSAVSLA. C30 acts as the Nucleophile in catalysis.

It belongs to the peptidase C59 family. Homotetramer. Dimer of dimers.

The protein localises to the periplasm. The catalysed reaction is a penicillin + H2O = 6-aminopenicillanate + a carboxylate. Its activity is regulated as follows. Exhibits uncharacteristic kinetic behavior, showing positive cooperativity coupled with substrate inhibition. Penicillin acylase activity is enhanced in the presence of the reducing agent DTT, indicating active sulfhydryl group in the enzyme. Also shows enhanced activity in presence of organic solvents and detergents. Inhibited largely in presence of Ag(+), Hg(2+) and Cd(2+) ions, which have strong affinities for sulfhydryl groups. Activity is also inhibited by bile salts. Its function is as follows. Catalyzes the hydrolysis of penicillin V to 6-aminopenicillanate (6-APA). Shows high specificity towards penicillin V. Can use other beta-lactam substrates, including penicillin G, ampicillin, cephalexin, cloxacillin and dicloxacillin, but at a rate less than 10% of that of penicillin V. Does not show any activity with glyco- or tauro-conjugated bile salts. The chain is Penicillin V acylase from Pectobacterium atrosepticum (strain SCRI 1043 / ATCC BAA-672) (Erwinia carotovora subsp. atroseptica).